Consider the following 462-residue polypeptide: Cysteine--tRNA ligase (462 aa).

Cysteine 29 is a binding site for Zn(2+). The 'HIGH' region motif lies at 31 to 41 (PTVYNHAHIGN). The Zn(2+) site is built by cysteine 211, histidine 236, and glutamate 240. A 'KMSKS' region motif is present at residues 269–273 (KMSKS). Residue lysine 272 participates in ATP binding.

Belongs to the class-I aminoacyl-tRNA synthetase family. In terms of assembly, monomer. Zn(2+) serves as cofactor.

The protein localises to the cytoplasm. It catalyses the reaction tRNA(Cys) + L-cysteine + ATP = L-cysteinyl-tRNA(Cys) + AMP + diphosphate. In Caulobacter sp. (strain K31), this protein is Cysteine--tRNA ligase.